Here is a 465-residue protein sequence, read N- to C-terminus: tRNA modification GTPase MnmE (465 aa).

(6S)-5-formyl-5,6,7,8-tetrahydrofolate-binding residues include Arg21, Glu85, and Lys124. One can recognise a TrmE-type G domain in the interval Gly220 to His387. K(+) is bound at residue Asn230. GTP contacts are provided by residues Asn230–Thr235, Ser249–Thr255, Asp274–Gly277, and Asn337–Asp340. Ser234 provides a ligand contact to Mg(2+). Residues Ser249, Ile251, and Thr254 each contribute to the K(+) site. Residue Thr255 participates in Mg(2+) binding. Lys465 is a (6S)-5-formyl-5,6,7,8-tetrahydrofolate binding site.

Belongs to the TRAFAC class TrmE-Era-EngA-EngB-Septin-like GTPase superfamily. TrmE GTPase family. As to quaternary structure, homodimer. Heterotetramer of two MnmE and two MnmG subunits. Requires K(+) as cofactor.

The protein localises to the cytoplasm. Functionally, exhibits a very high intrinsic GTPase hydrolysis rate. Involved in the addition of a carboxymethylaminomethyl (cmnm) group at the wobble position (U34) of certain tRNAs, forming tRNA-cmnm(5)s(2)U34. This Bacteroides thetaiotaomicron (strain ATCC 29148 / DSM 2079 / JCM 5827 / CCUG 10774 / NCTC 10582 / VPI-5482 / E50) protein is tRNA modification GTPase MnmE.